The following is an 817-amino-acid chain: ABC transporter G family member STR (817 aa).

Positions 1–30 (MARLERDGTNKSLESLMDSHKPGGTTTNLN) are disordered. Over 1–542 (MARLERDGTN…RTVLNVIRTP (542 aa)) the chain is Cytoplasmic. The 252-residue stretch at 43-294 (LEFTNLSYSI…LSGFGRPVPD (252 aa)) folds into the ABC transporter domain. 87–94 (GPSGAGKS) contacts ATP. 3 disordered regions span residues 321 to 349 (QYQHDGHKPDPAAMTPVPKPPRTPYRRNT), 362 to 395 (GFTAGTPQPDSSQFGLDDDDNDDDENFDNSLERR), and 439 to 463 (RPPSWTPARTPGWTPGKTPLSGPRS). A compositionally biased stretch (polar residues) spans 362–375 (GFTAGTPQPDSSQF). The span at 377-388 (LDDDDNDDDENF) shows a compositional bias: acidic residues. A helical membrane pass occupies residues 543 to 563 (ELFASREIVLTVMALVLSTIF). Residues 564–579 (KNLGDTTFIDINRLLN) lie on the Extracellular side of the membrane. Residues 580 to 600 (FYIFAVCLVFFSSNDAVPSFI) traverse the membrane as a helical segment. Topologically, residues 601-621 (MERFIFIRETSHNAYRASSYV) are cytoplasmic. A helical transmembrane segment spans residues 622–642 (ISSLIVYLPFFAVQGLTFAVI). At 643 to 657 (TKLMLHLKSNLFNFW) the chain is on the extracellular side. Residues 658–678 (MILFASLITTNAYVMLVSALV) traverse the membrane as a helical segment. At 679-681 (PSY) the chain is on the cytoplasmic side. Residues 682–702 (ITGYAVVIATTALFFLTCGFF) form a helical membrane-spanning segment. At 703–787 (LKRTQIPAYW…TMDITMESLW (85 aa)) the chain is on the extracellular side. N-linked (GlcNAc...) asparagine glycosylation occurs at N762. A helical transmembrane segment spans residues 788 to 808 (YDILILLAWGVLYRFFFYLVL). The Cytoplasmic segment spans residues 809-817 (RFYSKNERK).

It belongs to the ABC transporter superfamily. ABCG family. Stunted arbuscule (STR) subfamily. In terms of assembly, heterodimerizes with STR2; the resulting transporter is located in the peri-arbuscular membrane. As to expression, expressed constitutively in the vascular tissue of roots.

The protein resides in the cell membrane. Together with STR2, required for arbuscule development in arbuscular mycorrhizal (AM) symbiosis. In Medicago truncatula (Barrel medic), this protein is ABC transporter G family member STR.